Consider the following 344-residue polypeptide: Pre-mRNA-splicing factor cwc-21 (344 aa).

Polar residues predominate over residues 1–19 (MSDNVGLSTPRGSGTSGYV). Disordered stretches follow at residues 1–58 (MSDN…LEHD) and 98–344 (EMER…DNRD). Over residues 38 to 58 (KDFDSLKHQPRQPDKGLLEHD) the composition is skewed to basic and acidic residues. The 44-residue stretch at 55–98 (LEHDRKREVEVKVFELRDKLEEEGVEEDEIETRCDELRRKLLAE) folds into the CWF21 domain. The stretch at 69-105 (ELRDKLEEEGVEEDEIETRCDELRRKLLAEMERNQNS) forms a coiled coil. Basic and acidic residues-rich tracts occupy residues 120–167 (QVHE…REAN), 188–226 (RGGD…DRPP), and 238–277 (GGRD…DTGR). The span at 288 to 306 (SRSRSRSRSYSRSRSPPRR) shows a compositional bias: basic residues. 2 stretches are compositionally biased toward basic and acidic residues: residues 307 to 316 (RAADSQDRSL) and 327 to 344 (SPDR…DNRD).

This sequence belongs to the CWC21 family. As to quaternary structure, associates with the NTC complex (or PRP19-associated complex). The NTC complex associates with the spliceosome after the release of the U1 and U4 snRNAs and forms the CWC spliceosome subcomplex reminiscent of a late-stage spliceosome.

The protein resides in the cytoplasm. It is found in the nucleus. Its function is as follows. Involved in pre-mRNA splicing. May function at or prior to the first catalytic step of splicing at the catalytic center of the spliceosome. May do so by stabilizing the catalytic center or the position of the RNA substrate. This is Pre-mRNA-splicing factor cwc-21 (cwc-21) from Neurospora crassa (strain ATCC 24698 / 74-OR23-1A / CBS 708.71 / DSM 1257 / FGSC 987).